We begin with the raw amino-acid sequence, 301 residues long: Recombination-associated protein RdgC (301 aa).

The protein belongs to the RdgC family.

It is found in the cytoplasm. It localises to the nucleoid. May be involved in recombination. In Stenotrophomonas maltophilia (strain R551-3), this protein is Recombination-associated protein RdgC.